The primary structure comprises 500 residues: uncharacterized protein (500 aa).

The signal sequence occupies residues 1–20 (MHSIIFKAAVALLGVSTAAG). Asn-43 carries an N-linked (GlcNAc...) asparagine glycan. The 173-residue stretch at 60-232 (TALRPDCIIA…TAFTVKTHTQ (173 aa)) folds into the FAD-binding PCMH-type domain. A Pros-8alpha-FAD histidine modification is found at His-98. 5 N-linked (GlcNAc...) asparagine glycosylation sites follow: Asn-194, Asn-201, Asn-246, Asn-299, and Asn-414.

Belongs to the oxygen-dependent FAD-linked oxidoreductase family. Requires FAD as cofactor.

It localises to the secreted. This is an uncharacterized protein from Arthroderma benhamiae (strain ATCC MYA-4681 / CBS 112371) (Trichophyton mentagrophytes).